Here is a 37-residue protein sequence, read N- to C-terminus: Large ribosomal subunit protein bL36c (37 aa).

This sequence belongs to the bacterial ribosomal protein bL36 family.

It is found in the plastid. Its subcellular location is the chloroplast. The chain is Large ribosomal subunit protein bL36c from Coffea arabica (Arabian coffee).